Consider the following 417-residue polypeptide: Serpin H1 (417 aa).

Positions 1–18 are cleaved as a signal peptide; that stretch reads MRSLLLLSAFCLLEAALA. The residue at position 94 (Lys94) is an N6-succinyllysine. Residues Asn120 and Asn125 are each glycosylated (N-linked (GlcNAc...) asparagine). Ser141 is subject to Phosphoserine. An N6-acetyllysine modification is found at Lys206. Lys295 is subject to N6-succinyllysine. Lys318 is modified (N6-acetyllysine). The Prevents secretion from ER signature appears at 414–417; that stretch reads RDEL.

It belongs to the serpin family.

It localises to the endoplasmic reticulum lumen. Functionally, binds specifically to collagen. Could be involved as a chaperone in the biosynthetic pathway of collagen. The protein is Serpin H1 (SERPINH1) of Pongo abelii (Sumatran orangutan).